Consider the following 60-residue polypeptide: Large ribosomal subunit protein bL32 (60 aa).

The span at 1–19 shows a compositional bias: basic residues; that stretch reads MGVPKRKTSKGRRDKRRAH. The tract at residues 1-20 is disordered; that stretch reads MGVPKRKTSKGRRDKRRAHL.

This sequence belongs to the bacterial ribosomal protein bL32 family.

This is Large ribosomal subunit protein bL32 from Syntrophobacter fumaroxidans (strain DSM 10017 / MPOB).